Consider the following 190-residue polypeptide: Small ribosomal subunit protein eS7 (190 aa).

The protein belongs to the eukaryotic ribosomal protein eS7 family.

The chain is Small ribosomal subunit protein eS7 (RPS7) from Avicennia marina (Grey mangrove).